We begin with the raw amino-acid sequence, 292 residues long: Putative pyruvate, phosphate dikinase regulatory protein (292 aa).

Position 155–162 (155–162 (GVSRSSKT)) interacts with ADP.

The protein belongs to the pyruvate, phosphate/water dikinase regulatory protein family. PDRP subfamily.

The catalysed reaction is N(tele)-phospho-L-histidyl/L-threonyl-[pyruvate, phosphate dikinase] + ADP = N(tele)-phospho-L-histidyl/O-phospho-L-threonyl-[pyruvate, phosphate dikinase] + AMP + H(+). It catalyses the reaction N(tele)-phospho-L-histidyl/O-phospho-L-threonyl-[pyruvate, phosphate dikinase] + phosphate + H(+) = N(tele)-phospho-L-histidyl/L-threonyl-[pyruvate, phosphate dikinase] + diphosphate. In terms of biological role, bifunctional serine/threonine kinase and phosphorylase involved in the regulation of the pyruvate, phosphate dikinase (PPDK) by catalyzing its phosphorylation/dephosphorylation. The protein is Putative pyruvate, phosphate dikinase regulatory protein of Acidiphilium cryptum (strain JF-5).